A 197-amino-acid polypeptide reads, in one-letter code: Neurturin (197 aa).

The signal sequence occupies residues 1–19 (MQRWKAAALASVLCSSVLS). A propeptide spanning residues 20-95 (IWMCREGLLL…RAGPRRRRAR (76 aa)) is cleaved from the precursor. Residues 74–93 (TPWAGRPPGPRRRAGPRRRR) are disordered. Over residues 82–93 (GPRRRAGPRRRR) the composition is skewed to basic residues. Cystine bridges form between Cys-103–Cys-165, Cys-130–Cys-194, and Cys-134–Cys-196. Heparan sulfate group is bound by residues Arg-149, Arg-158, Arg-160, and Gln-162.

It belongs to the TGF-beta family. GDNF subfamily. Homodimer; disulfide-linked. Interacts with GFRA2 coreceptor and RET: forms a 2:2:2 ternary complex composed of NRTN ligand, GFRA2 and RET receptor. Also forms a 4:4:4 tetrameric complex composed of 4 copies of NRTN ligand, GFRA2 and RET receptor, which prevents endocytosis of RET.

The protein localises to the secreted. Its function is as follows. Growth factor that supports the survival of sympathetic neurons in culture. May regulate the development and maintenance of the CNS. Involved in the development of the neural crest. Might control the size of non-neuronal cell population such as haemopoietic cells. Acts by binding to its coreceptor, GFRA2, leading to autophosphorylation and activation of the RET receptor. Heparan sulfate-binding is required for signaling. This chain is Neurturin, found in Homo sapiens (Human).